The following is a 491-amino-acid chain: Anthranilate synthase component 1 (491 aa).

L-tryptophan-binding positions include S49 and P271–L273. G306–T307 contributes to the chorismate binding site. Residue E333 participates in Mg(2+) binding. Chorismate contacts are provided by residues Y421, R441, G455 to G457, and G457. Mg(2+) is bound at residue E470.

The protein belongs to the anthranilate synthase component I family. As to quaternary structure, heterotetramer consisting of two non-identical subunits: a beta subunit (TrpG) and a large alpha subunit (TrpE). The cofactor is Mg(2+).

The catalysed reaction is chorismate + L-glutamine = anthranilate + pyruvate + L-glutamate + H(+). Its pathway is amino-acid biosynthesis; L-tryptophan biosynthesis; L-tryptophan from chorismate: step 1/5. Its activity is regulated as follows. Feedback inhibited by tryptophan. Its function is as follows. Part of a heterotetrameric complex that catalyzes the two-step biosynthesis of anthranilate, an intermediate in the biosynthesis of L-tryptophan. In the first step, the glutamine-binding beta subunit (TrpG) of anthranilate synthase (AS) provides the glutamine amidotransferase activity which generates ammonia as a substrate that, along with chorismate, is used in the second step, catalyzed by the large alpha subunit of AS (TrpE) to produce anthranilate. In the absence of TrpG, TrpE can synthesize anthranilate directly from chorismate and high concentrations of ammonia. The polypeptide is Anthranilate synthase component 1 (trpE) (Neisseria meningitidis serogroup A / serotype 4A (strain DSM 15465 / Z2491)).